We begin with the raw amino-acid sequence, 462 residues long: Glycine--tRNA ligase (462 aa).

R100 and E174 together coordinate substrate. ATP is bound by residues 206-208, 216-221, 290-291, and 334-337; these read RNE, FRTREF, EL, and GADR. Residue 221-225 coordinates substrate; the sequence is FEQME. Residue 330–334 coordinates substrate; it reads EPSLG.

This sequence belongs to the class-II aminoacyl-tRNA synthetase family. As to quaternary structure, homodimer.

Its subcellular location is the cytoplasm. It catalyses the reaction tRNA(Gly) + glycine + ATP = glycyl-tRNA(Gly) + AMP + diphosphate. Catalyzes the attachment of glycine to tRNA(Gly). The protein is Glycine--tRNA ligase of Alkaliphilus metalliredigens (strain QYMF).